Consider the following 285-residue polypeptide: Phycobilisome 31.6 kDa linker polypeptide, phycocyanin-associated, rod (285 aa).

The PBS-linker domain occupies M1 to R180.

It belongs to the phycobilisome linker protein family.

It is found in the cellular thylakoid membrane. Its function is as follows. Rod linker protein, associated with phycocyanin. Linker polypeptides determine the state of aggregation and the location of the disk-shaped phycobiliprotein units within the phycobilisome and modulate their spectroscopic properties in order to mediate a directed and optimal energy transfer. The protein is Phycobilisome 31.6 kDa linker polypeptide, phycocyanin-associated, rod (cpcI3) of Microchaete diplosiphon (Fremyella diplosiphon).